The chain runs to 974 residues: Glycine dehydrogenase (decarboxylating) (974 aa).

Lys720 bears the N6-(pyridoxal phosphate)lysine mark.

It belongs to the GcvP family. In terms of assembly, the glycine cleavage system is composed of four proteins: P, T, L and H. Requires pyridoxal 5'-phosphate as cofactor.

The catalysed reaction is N(6)-[(R)-lipoyl]-L-lysyl-[glycine-cleavage complex H protein] + glycine + H(+) = N(6)-[(R)-S(8)-aminomethyldihydrolipoyl]-L-lysyl-[glycine-cleavage complex H protein] + CO2. Its function is as follows. The glycine cleavage system catalyzes the degradation of glycine. The P protein binds the alpha-amino group of glycine through its pyridoxal phosphate cofactor; CO(2) is released and the remaining methylamine moiety is then transferred to the lipoamide cofactor of the H protein. The sequence is that of Glycine dehydrogenase (decarboxylating) from Cupriavidus metallidurans (strain ATCC 43123 / DSM 2839 / NBRC 102507 / CH34) (Ralstonia metallidurans).